The sequence spans 298 residues: Tyrosine recombinase XerC (298 aa).

One can recognise a Core-binding (CB) domain in the interval 2–88 (TDLHTDVERY…ALRSFFDWLV (87 aa)). In terms of domain architecture, Tyr recombinase spans 109–288 (HLPKNIDVDD…DFQHLASVYD (180 aa)). Catalysis depends on residues Arg148, Lys172, His240, Arg243, and His266. The active-site O-(3'-phospho-DNA)-tyrosine intermediate is the Tyr275.

It belongs to the 'phage' integrase family. XerC subfamily. In terms of assembly, forms a cyclic heterotetrameric complex composed of two molecules of XerC and two molecules of XerD, in which XerC interacts with XerD via its C-terminal region, XerD interacts with XerC via its C-terminal region and so on.

Its subcellular location is the cytoplasm. Its activity is regulated as follows. FtsK may regulate the catalytic switch between XerC and XerD in the heterotetrameric complex during the two steps of the recombination process. Its function is as follows. Site-specific tyrosine recombinase, which acts by catalyzing the cutting and rejoining of the recombining DNA molecules. Binds cooperatively to specific DNA consensus sequences that are separated from XerD binding sites by a short central region, forming the heterotetrameric XerC-XerD complex that recombines DNA substrates. The complex is essential to convert dimers of the bacterial chromosome into monomers to permit their segregation at cell division. It also contributes to the segregational stability of plasmids. In the complex XerC specifically exchanges the top DNA strands. The chain is Tyrosine recombinase XerC from Escherichia coli (strain 55989 / EAEC).